The following is a 261-amino-acid chain: Complex I assembly factor TIMMDC1, mitochondrial (261 aa).

Transmembrane regions (helical) follow at residues 67 to 87 (LNSV…YGGV), 131 to 151 (WGWR…CMSV), and 183 to 203 (AGGI…LLLM).

Belongs to the Tim17/Tim22/Tim23 family. In terms of assembly, associates with complex I assembly intermediates during its biogenesis in a NdufAF3 and NdufAF4 dependent manner.

The protein resides in the membrane. Chaperone protein involved in the assembly of the mitochondrial NADH:ubiquinone oxidoreductase complex (complex I). Essential for viability. This is Complex I assembly factor TIMMDC1, mitochondrial from Drosophila melanogaster (Fruit fly).